Consider the following 321-residue polypeptide: ATP phosphoribosyltransferase regulatory subunit (321 aa).

Belongs to the class-II aminoacyl-tRNA synthetase family. HisZ subfamily. As to quaternary structure, heteromultimer composed of HisG and HisZ subunits.

Its subcellular location is the cytoplasm. It participates in amino-acid biosynthesis; L-histidine biosynthesis; L-histidine from 5-phospho-alpha-D-ribose 1-diphosphate: step 1/9. Required for the first step of histidine biosynthesis. May allow the feedback regulation of ATP phosphoribosyltransferase activity by histidine. In Thiobacillus denitrificans (strain ATCC 25259 / T1), this protein is ATP phosphoribosyltransferase regulatory subunit.